The following is a 226-amino-acid chain: Orotate phosphoribosyltransferase (226 aa).

Residues lysine 26, 73-74 (YK), arginine 100, lysine 101, lysine 104, histidine 106, and 128-136 (EDVTTSGKS) each bind 5-phospho-alpha-D-ribose 1-diphosphate. Orotate-binding residues include threonine 132 and arginine 161.

The protein belongs to the purine/pyrimidine phosphoribosyltransferase family. PyrE subfamily. Homodimer. Mg(2+) is required as a cofactor.

It catalyses the reaction orotidine 5'-phosphate + diphosphate = orotate + 5-phospho-alpha-D-ribose 1-diphosphate. It participates in pyrimidine metabolism; UMP biosynthesis via de novo pathway; UMP from orotate: step 1/2. In terms of biological role, catalyzes the transfer of a ribosyl phosphate group from 5-phosphoribose 1-diphosphate to orotate, leading to the formation of orotidine monophosphate (OMP). This Agathobacter rectalis (strain ATCC 33656 / DSM 3377 / JCM 17463 / KCTC 5835 / VPI 0990) (Eubacterium rectale) protein is Orotate phosphoribosyltransferase.